Reading from the N-terminus, the 913-residue chain is Probable TonB-dependent receptor HI_1217 (913 aa).

The first 27 residues, 1–27 (MKKAIKLNLITLGLINTIGMTITQAQA), serve as a signal peptide directing secretion. A TBDR plug domain is found at 42–165 (SNDKKPFTEA…LAGSANFRTL (124 aa)). The 738-residue stretch at 176–913 (PFGIILKGMT…TYILSLNYKF (738 aa)) folds into the TBDR beta-barrel domain. Residues 896 to 913 (LYNFARGRTYILSLNYKF) carry the TonB C-terminal box motif.

Belongs to the TonB-dependent receptor family.

It localises to the cell outer membrane. Functionally, probable receptor, TonB-dependent. This Haemophilus influenzae (strain ATCC 51907 / DSM 11121 / KW20 / Rd) protein is Probable TonB-dependent receptor HI_1217.